The sequence spans 367 residues: Aminomethyltransferase (367 aa).

Belongs to the GcvT family. In terms of assembly, the glycine cleavage system is composed of four proteins: P, T, L and H.

The enzyme catalyses N(6)-[(R)-S(8)-aminomethyldihydrolipoyl]-L-lysyl-[protein] + (6S)-5,6,7,8-tetrahydrofolate = N(6)-[(R)-dihydrolipoyl]-L-lysyl-[protein] + (6R)-5,10-methylene-5,6,7,8-tetrahydrofolate + NH4(+). Functionally, the glycine cleavage system catalyzes the degradation of glycine. In Mycobacterium bovis (strain ATCC BAA-935 / AF2122/97), this protein is Aminomethyltransferase.